The following is a 329-amino-acid chain: Segregation and condensation protein B (329 aa).

3 disordered regions span residues 1–39 (MTTG…GPAD), 252–274 (IVEK…SDPA), and 286–329 (SEAA…PKPE).

This sequence belongs to the ScpB family. In terms of assembly, homodimer. Homodimerization may be required to stabilize the binding of ScpA to the Smc head domains. Component of the Structural Maintenance of Chromosome (SMC) condensin-like complex composed of ScpA, ScpB and the Smc homodimer. ScpA and ScpB bind to the head domain of Smc, the presence of the three proteins is required for the association of the complex with DNA.

The protein localises to the cytoplasm. A conditionally essential component of the chromosome segregation machinery. Required for chromosome condensation and partitioning. Important for positioning and anchoring of ParB-parS complexes (ori of replication) in the subpolar region, and of the ter replication site, as well as for segration of the ParB-parS complex and thus chromosome segregation. Probably acts via the formation of a condensin-like complex containing Smc, ScpA and ScpB that pulls DNA away from mid-cell into both cell halves. The polypeptide is Segregation and condensation protein B (Myxococcus xanthus (strain DK1622)).